We begin with the raw amino-acid sequence, 392 residues long: Integrin-linked kinase-associated serine/threonine phosphatase 2C (392 aa).

An N-acetylmethionine modification is found at methionine 1. Residues 1-90 are disordered; it reads MDLFGDLPEP…TSEEEKNGSE (90 aa). At serine 13 the chain carries Phosphoserine. The segment covering 56-70 has biased composition (polar residues); the sequence is SGDSGSLATSISQMV. Residues 72–90 are compositionally biased toward basic and acidic residues; the sequence is TEGKGAKRKTSEEEKNGSE. The region spanning 108 to 390 is the PPM-type phosphatase domain; the sequence is KGYVAERKGE…DNVTVMVVRI (283 aa). Positions 152 and 153 each coordinate Mn(2+). Lysine 210 is subject to N6-acetyllysine. Mn(2+) is bound by residues aspartate 326 and aspartate 381.

It belongs to the PP2C family. In terms of assembly, interacts with ILK. Specific association with ILK is independent of the catalytic activity of either partner. Mg(2+) serves as cofactor. Mn(2+) is required as a cofactor. In terms of tissue distribution, widely expressed. Highest levels expressed in striated muscle. Much lower levels evident in various smooth muscle tissues.

The protein resides in the cytoplasm. The enzyme catalyses O-phospho-L-seryl-[protein] + H2O = L-seryl-[protein] + phosphate. The catalysed reaction is O-phospho-L-threonyl-[protein] + H2O = L-threonyl-[protein] + phosphate. Inhibited rather than stimulated by magnesium. Its function is as follows. Protein phosphatase that may play a role in regulation of cell cycle progression via dephosphorylation of its substrates whose appropriate phosphorylation states might be crucial for cell proliferation. Selectively associates with integrin linked kinase (ILK), to modulate cell adhesion and growth factor signaling. Inhibits the ILK-GSK3B signaling axis and may play an important role in inhibiting oncogenic transformation. This Homo sapiens (Human) protein is Integrin-linked kinase-associated serine/threonine phosphatase 2C (ILKAP).